The primary structure comprises 195 residues: CASP-like protein 1B2 (195 aa).

Residues Met-1–Leu-25 are Cytoplasmic-facing. A helical membrane pass occupies residues Ile-26 to Ile-46. Topologically, residues Met-47–Pro-78 are extracellular. Residues Ala-79–Val-99 form a helical membrane-spanning segment. At Thr-100–His-114 the chain is on the cytoplasmic side. A helical transmembrane segment spans residues Leu-115–Ala-135. Topologically, residues Gln-136 to His-160 are extracellular. The helical transmembrane segment at Gly-161–Leu-181 threads the bilayer. Topologically, residues Ser-182–Gln-195 are cytoplasmic.

It belongs to the Casparian strip membrane proteins (CASP) family. Homodimer and heterodimers.

It is found in the cell membrane. This is CASP-like protein 1B2 from Oryza sativa subsp. indica (Rice).